A 62-amino-acid polypeptide reads, in one-letter code: Photosystem II reaction center protein Z (62 aa).

Transmembrane regions (helical) follow at residues 8–28 and 41–61; these read AVFALIATSSILLISVPVVFA and FSGTSLWIGLVFLVGILNSLI.

The protein belongs to the PsbZ family. In terms of assembly, PSII is composed of 1 copy each of membrane proteins PsbA, PsbB, PsbC, PsbD, PsbE, PsbF, PsbH, PsbI, PsbJ, PsbK, PsbL, PsbM, PsbT, PsbY, PsbZ, Psb30/Ycf12, at least 3 peripheral proteins of the oxygen-evolving complex and a large number of cofactors. It forms dimeric complexes.

Its subcellular location is the plastid. It localises to the chloroplast thylakoid membrane. In terms of biological role, may control the interaction of photosystem II (PSII) cores with the light-harvesting antenna, regulates electron flow through the 2 photosystem reaction centers. PSII is a light-driven water plastoquinone oxidoreductase, using light energy to abstract electrons from H(2)O, generating a proton gradient subsequently used for ATP formation. This is Photosystem II reaction center protein Z from Jasminum nudiflorum (Winter jasmine).